The sequence spans 234 residues: Leucyl/phenylalanyl-tRNA--protein transferase (234 aa).

The protein belongs to the L/F-transferase family.

It is found in the cytoplasm. It carries out the reaction N-terminal L-lysyl-[protein] + L-leucyl-tRNA(Leu) = N-terminal L-leucyl-L-lysyl-[protein] + tRNA(Leu) + H(+). The enzyme catalyses N-terminal L-arginyl-[protein] + L-leucyl-tRNA(Leu) = N-terminal L-leucyl-L-arginyl-[protein] + tRNA(Leu) + H(+). It catalyses the reaction L-phenylalanyl-tRNA(Phe) + an N-terminal L-alpha-aminoacyl-[protein] = an N-terminal L-phenylalanyl-L-alpha-aminoacyl-[protein] + tRNA(Phe). Its function is as follows. Functions in the N-end rule pathway of protein degradation where it conjugates Leu, Phe and, less efficiently, Met from aminoacyl-tRNAs to the N-termini of proteins containing an N-terminal arginine or lysine. This Pectobacterium atrosepticum (strain SCRI 1043 / ATCC BAA-672) (Erwinia carotovora subsp. atroseptica) protein is Leucyl/phenylalanyl-tRNA--protein transferase.